Here is a 212-residue protein sequence, read N- to C-terminus: Root-specific lectin (212 aa).

An N-terminal signal peptide occupies residues 1–26 (MKMMSTRALALGAAAVLAFAAATAHA). A Pyrrolidone carboxylic acid modification is found at Gln-27. 4 consecutive Chitin-binding type-1 domains span residues 27-68 (QRCG…ACYT), 69-111 (SKRC…PCRA), 112-154 (DIKC…ACST), and 155-197 (DKPC…GCDG). 16 cysteine pairs are disulfide-bonded: Cys-29-Cys-44, Cys-38-Cys-50, Cys-43-Cys-57, Cys-61-Cys-66, Cys-72-Cys-87, Cys-81-Cys-93, Cys-86-Cys-100, Cys-104-Cys-109, Cys-115-Cys-130, Cys-124-Cys-136, Cys-129-Cys-143, Cys-147-Cys-152, Cys-158-Cys-173, Cys-167-Cys-179, Cys-172-Cys-186, and Cys-190-Cys-195. 36-38 (MEC) contacts substrate. Residue 88-99 (SQWGYCGFGAEY) participates in substrate binding. 140 to 141 (SE) contacts substrate. Asn-206 is a glycosylation site (N-linked (GlcNAc...) asparagine).

In roots.

Carbohydrate binding. The polypeptide is Root-specific lectin (Hordeum vulgare (Barley)).